Reading from the N-terminus, the 475-residue chain is MAANGGDHTSARPHVVLLPSAGMGHLVPFARLAVALSEGHGCNVSVAAVQPTVSSAESRLLDALFVAAAPAVRRLDFRLAPFDESEFPGADPFFLRFEATRRSAPLLGPLLDAAEASALVTDIVLASVALPVARERGVPCYVLFTSSAAMLSLCAYFPAYLDAHAAAGSVGVGVGNVDIPGVFRIPKSSVPQALHDPDHLFTQQFVANGRCLVACDGILVNTFDAFEPDAVTALRQGSITVSGGFPPVFTVGPMLPVRFQAEETADYMRWLSAQPPRSVVYVSFGSRKAIPRDQLRELAAGLEASGKRFLWVVKSTIVDRDDTADLGGLLGDGFLERVQGRAFVTMGWVEQEEILQHGSVGLFISHCGWNSLTEAAAFGVPVLAWPRFGDQRVNAALVARSGLGAWEEGWTWDGEEGLTTRKEVAKKIKGMMGYDAVAEKAAKVGDAAAAAIAKCGTSYQSLEEFVQRCRDAERK.

Residues S286, 348 to 349 (WV), 366 to 374 (HCGWNSLTE), and 388 to 391 (FGDQ) each bind UDP-alpha-D-glucose.

This sequence belongs to the UDP-glycosyltransferase family. In terms of tissue distribution, expressed in radicles, hypocotyls and juvenile leaves. Expressed at low levels in roots.

In terms of biological role, bifunctional glycosyltransferase that can produce both C- and O-glycosidated flavonoids. Converts 2-hydroxynaringenin to isovitexin. Converts eriodictyol to orientin and isoorientin. Converts naringenin and eriodictyol to naringenin 7-O-glucoside and eriodictyol 7-O-glucoside, respectively. The sequence is that of UDP-glycosyltransferase 708A6 from Zea mays (Maize).